A 122-amino-acid chain; its full sequence is Large ribosomal subunit protein uL14 (122 aa).

Belongs to the universal ribosomal protein uL14 family. Part of the 50S ribosomal subunit. Forms a cluster with proteins L3 and L19. In the 70S ribosome, L14 and L19 interact and together make contacts with the 16S rRNA in bridges B5 and B8.

Binds to 23S rRNA. Forms part of two intersubunit bridges in the 70S ribosome. The sequence is that of Large ribosomal subunit protein uL14 from Paraburkholderia phymatum (strain DSM 17167 / CIP 108236 / LMG 21445 / STM815) (Burkholderia phymatum).